Consider the following 361-residue polypeptide: Glycerophosphodiester phosphodiesterase GDPD1, chloroplastic (361 aa).

A chloroplast-targeting transit peptide spans 1–53 (MSLKAIHVSEVPSLDHFPENPSLICSSRKANNKFVVVGHRGHGMNMSQSPDLR). One can recognise a GP-PDE domain in the interval 54–323 (FSALKENSIL…DHVEEITEAV (270 aa)).

The protein belongs to the glycerophosphoryl diester phosphodiesterase family. It depends on Mg(2+) as a cofactor. Expressed in roots, shoots, rosette leaves, stems, flowers and siliques.

Its subcellular location is the plastid. It is found in the chloroplast. It carries out the reaction a sn-glycero-3-phosphodiester + H2O = an alcohol + sn-glycerol 3-phosphate + H(+). Functionally, hydrolyzes glycerolphosphoglycerol, glycerophosphocholine and glycerophosphoethanolamine in vitro. May be involved in release of inorganic phosphate (Pi) from phospholipids during Pi starvation. The sequence is that of Glycerophosphodiester phosphodiesterase GDPD1, chloroplastic from Arabidopsis thaliana (Mouse-ear cress).